The chain runs to 349 residues: Isopentenyl-diphosphate delta-isomerase (349 aa).

Substrate is bound at residue 9–10 (RK). FMN-binding positions include 65 to 67 (AMT), serine 95, and asparagine 124. 95 to 97 (STH) is a substrate binding site. Glutamine 154 serves as a coordination point for substrate. Glutamate 155 contacts Mg(2+). FMN is bound by residues lysine 186, serine 211, threonine 216, 262-264 (GLR), and 283-284 (SR).

Belongs to the IPP isomerase type 2 family. In terms of assembly, homooctamer. Dimer of tetramers. Requires FMN as cofactor. NADPH serves as cofactor. Mg(2+) is required as a cofactor.

The protein resides in the cytoplasm. The enzyme catalyses isopentenyl diphosphate = dimethylallyl diphosphate. In terms of biological role, involved in the biosynthesis of isoprenoids. Catalyzes the 1,3-allylic rearrangement of the homoallylic substrate isopentenyl (IPP) to its allylic isomer, dimethylallyl diphosphate (DMAPP). The protein is Isopentenyl-diphosphate delta-isomerase of Staphylococcus epidermidis (strain ATCC 35984 / DSM 28319 / BCRC 17069 / CCUG 31568 / BM 3577 / RP62A).